The following is a 329-amino-acid chain: N-acetyl-gamma-glutamyl-phosphate reductase (329 aa).

Cys-155 is a catalytic residue.

It belongs to the NAGSA dehydrogenase family. Type 1 subfamily.

Its subcellular location is the cytoplasm. The enzyme catalyses N-acetyl-L-glutamate 5-semialdehyde + phosphate + NADP(+) = N-acetyl-L-glutamyl 5-phosphate + NADPH + H(+). Its pathway is amino-acid biosynthesis; L-arginine biosynthesis; N(2)-acetyl-L-ornithine from L-glutamate: step 3/4. Functionally, catalyzes the NADPH-dependent reduction of N-acetyl-5-glutamyl phosphate to yield N-acetyl-L-glutamate 5-semialdehyde. The chain is N-acetyl-gamma-glutamyl-phosphate reductase from Shewanella piezotolerans (strain WP3 / JCM 13877).